The sequence spans 499 residues: Anaerobic nitric oxide reductase flavorubredoxin (499 aa).

The segment at 30–210 is zinc metallo-hydrolase; it reads TKGTSYNSYL…PFSALVTAKI (181 aa). The Fe cation site is built by His-79, Glu-81, Asp-83, His-147, Asp-166, and His-227. Positions 254–393 constitute a Flavodoxin-like domain; it reads ITLFYDSMSN…LCREHGQFIA (140 aa). Residues 260-264 and 342-369 each bind FMN; these read SMSNN and AFGS…ETAV. Positions 447 to 498 constitute a Rubredoxin-like domain; it reads KQCMLCTVCNWVYDPEIGEPNQGVEPNTAWIDVPDYFLCPECNLGKDVFVEV. Fe cation is bound by residues Cys-452, Cys-455, Cys-485, and Cys-488.

The protein in the N-terminal section; belongs to the zinc metallo-hydrolase group 3 family. Homotetramer. It depends on Fe cation as a cofactor. The cofactor is FMN.

It localises to the cytoplasm. It participates in nitrogen metabolism; nitric oxide reduction. In terms of biological role, anaerobic nitric oxide reductase; uses NADH to detoxify nitric oxide (NO), protecting several 4Fe-4S NO-sensitive enzymes. Has at least 2 reductase partners, only one of which (NorW, flavorubredoxin reductase) has been identified. NO probably binds to the di-iron center; electrons enter from the NorW at rubredoxin and are transferred sequentially to the FMN center and the di-iron center. Also able to function as an aerobic oxygen reductase. The sequence is that of Anaerobic nitric oxide reductase flavorubredoxin from Aliivibrio salmonicida (strain LFI1238) (Vibrio salmonicida (strain LFI1238)).